Here is a 677-residue protein sequence, read N- to C-terminus: UvrABC system protein B (677 aa).

Positions 24–412 (EGVLEGVPAQ…EGIVVEQVIR (389 aa)) constitute a Helicase ATP-binding domain. Position 37 to 44 (37 to 44 (GVTGSGKT)) interacts with ATP. Residues 90 to 113 (YYDYYQPEAYLPSSDTYIEKDLAI) carry the Beta-hairpin motif. Residues 429 to 591 (QIDDLMEEIQ…ITPQQIKKAR (163 aa)) enclose the Helicase C-terminal domain. A UVR domain is found at 635-670 (EKSMERTRKLMQEAAKKLEFIEAAQYRDELLKMEDL).

This sequence belongs to the UvrB family. Forms a heterotetramer with UvrA during the search for lesions. Interacts with UvrC in an incision complex.

The protein resides in the cytoplasm. In terms of biological role, the UvrABC repair system catalyzes the recognition and processing of DNA lesions. A damage recognition complex composed of 2 UvrA and 2 UvrB subunits scans DNA for abnormalities. Upon binding of the UvrA(2)B(2) complex to a putative damaged site, the DNA wraps around one UvrB monomer. DNA wrap is dependent on ATP binding by UvrB and probably causes local melting of the DNA helix, facilitating insertion of UvrB beta-hairpin between the DNA strands. Then UvrB probes one DNA strand for the presence of a lesion. If a lesion is found the UvrA subunits dissociate and the UvrB-DNA preincision complex is formed. This complex is subsequently bound by UvrC and the second UvrB is released. If no lesion is found, the DNA wraps around the other UvrB subunit that will check the other stand for damage. This Bacteroides fragilis (strain ATCC 25285 / DSM 2151 / CCUG 4856 / JCM 11019 / LMG 10263 / NCTC 9343 / Onslow / VPI 2553 / EN-2) protein is UvrABC system protein B.